The sequence spans 549 residues: Glucose-6-phosphate isomerase (549 aa).

Glu-355 (proton donor) is an active-site residue. Residues His-386 and Lys-514 contribute to the active site.

This sequence belongs to the GPI family.

It localises to the cytoplasm. It carries out the reaction alpha-D-glucose 6-phosphate = beta-D-fructose 6-phosphate. The protein operates within carbohydrate biosynthesis; gluconeogenesis. It participates in carbohydrate degradation; glycolysis; D-glyceraldehyde 3-phosphate and glycerone phosphate from D-glucose: step 2/4. Catalyzes the reversible isomerization of glucose-6-phosphate to fructose-6-phosphate. This is Glucose-6-phosphate isomerase from Salmonella agona (strain SL483).